Here is a 421-residue protein sequence, read N- to C-terminus: 3-isopropylmalate dehydratase large subunit (421 aa).

3 residues coordinate [4Fe-4S] cluster: Cys302, Cys362, and Cys365.

The protein belongs to the aconitase/IPM isomerase family. LeuC type 2 subfamily. Heterodimer of LeuC and LeuD. [4Fe-4S] cluster serves as cofactor.

It catalyses the reaction (2R,3S)-3-isopropylmalate = (2S)-2-isopropylmalate. The protein operates within amino-acid biosynthesis; L-leucine biosynthesis; L-leucine from 3-methyl-2-oxobutanoate: step 2/4. Its function is as follows. Catalyzes the isomerization between 2-isopropylmalate and 3-isopropylmalate, via the formation of 2-isopropylmaleate. This chain is 3-isopropylmalate dehydratase large subunit, found in Nitratiruptor sp. (strain SB155-2).